The primary structure comprises 165 residues: Probable deoxyuridine 5'-triphosphate nucleotidohydrolase (165 aa).

The segment covering 39-49 (GRIDTDGKTIG) has biased composition (basic and acidic residues). Residues 39-64 (GRIDTDGKTIGDRSPVTPTADEDSTD) form a disordered region.

This sequence belongs to the dCTP deaminase family. Archaeal dUTPase subfamily.

It carries out the reaction dUTP + H2O = dUMP + diphosphate + H(+). It functions in the pathway pyrimidine metabolism; dUMP biosynthesis; dUMP from dCTP (dUTP route): step 2/2. This enzyme is involved in nucleotide metabolism: it produces dUMP, the immediate precursor of thymidine nucleotides and it decreases the intracellular concentration of dUTP so that uracil cannot be incorporated into DNA. The chain is Probable deoxyuridine 5'-triphosphate nucleotidohydrolase from Halobacterium salinarum (strain ATCC 29341 / DSM 671 / R1).